A 329-amino-acid chain; its full sequence is Biotin synthase (329 aa).

Positions 48-278 constitute a Radical SAM core domain; that stretch reads FVGDKVFLCS…TKRISICGGR (231 aa). [4Fe-4S] cluster-binding residues include Cys66, Cys70, and Cys73. 2 residues coordinate [2Fe-2S] cluster: Ser143 and Cys203.

The protein belongs to the radical SAM superfamily. Biotin synthase family. In terms of assembly, homodimer. [4Fe-4S] cluster serves as cofactor. The cofactor is [2Fe-2S] cluster.

The enzyme catalyses (4R,5S)-dethiobiotin + (sulfur carrier)-SH + 2 reduced [2Fe-2S]-[ferredoxin] + 2 S-adenosyl-L-methionine = (sulfur carrier)-H + biotin + 2 5'-deoxyadenosine + 2 L-methionine + 2 oxidized [2Fe-2S]-[ferredoxin]. It functions in the pathway cofactor biosynthesis; biotin biosynthesis; biotin from 7,8-diaminononanoate: step 2/2. Its function is as follows. Catalyzes the conversion of dethiobiotin (DTB) to biotin by the insertion of a sulfur atom into dethiobiotin via a radical-based mechanism. The polypeptide is Biotin synthase (Geotalea daltonii (strain DSM 22248 / JCM 15807 / FRC-32) (Geobacter daltonii)).